The chain runs to 180 residues: Putative manganese efflux pump MntP (180 aa).

The next 6 membrane-spanning stretches (helical) occupy residues 6–26, 34–54, 67–87, 103–123, 130–150, and 159–179; these read LFALAVALGTDAFSLCIGIGI, IALISLTVLIFHILMPLLGWY, ASIAGALLLLYLGGKMIWDTI, GGLLLLSASVSMDALSVGFTL, LVLAAGVIGLVAGMMTFAGLT, and IGERAELVGGIILVGIGVKLF.

The protein belongs to the MntP (TC 9.B.29) family.

The protein resides in the cell membrane. In terms of biological role, probably functions as a manganese efflux pump. The chain is Putative manganese efflux pump MntP from Desulforamulus reducens (strain ATCC BAA-1160 / DSM 100696 / MI-1) (Desulfotomaculum reducens).